The following is a 170-amino-acid chain: Acetyl-CoA decarbonylase/synthase complex subunit epsilon 1 (170 aa).

The protein belongs to the CdhB family. In terms of assembly, heterotetramer of two alpha and two epsilon subunits. The ACDS complex is made up of alpha, epsilon, beta, gamma and delta subunits with a probable stoichiometry of (alpha(2)epsilon(2))(4)-beta(8)-(gamma(1)delta(1))(8).

It participates in one-carbon metabolism; methanogenesis from acetate. Part of a complex that catalyzes the reversible cleavage of acetyl-CoA, allowing growth on acetate as sole source of carbon and energy. The alpha-epsilon subcomponent functions as a carbon monoxide dehydrogenase. The precise role of the epsilon subunit is unclear; it may have a stabilizing role within the alpha(2)epsilon(2) component and/or be involved in electron transfer to FAD during a potential FAD-mediated CO oxidation. This chain is Acetyl-CoA decarbonylase/synthase complex subunit epsilon 1 (cdhB1), found in Methanosarcina acetivorans (strain ATCC 35395 / DSM 2834 / JCM 12185 / C2A).